Here is a 367-residue protein sequence, read N- to C-terminus: GTP cyclohydrolase FolE2 (367 aa).

It belongs to the GTP cyclohydrolase IV family.

It carries out the reaction GTP + H2O = 7,8-dihydroneopterin 3'-triphosphate + formate + H(+). The protein operates within cofactor biosynthesis; 7,8-dihydroneopterin triphosphate biosynthesis; 7,8-dihydroneopterin triphosphate from GTP: step 1/1. Functionally, converts GTP to 7,8-dihydroneopterin triphosphate. The chain is GTP cyclohydrolase FolE2 from Ruegeria sp. (strain TM1040) (Silicibacter sp.).